A 188-amino-acid chain; its full sequence is GTPase KRas (188 aa).

GTP is bound by residues 10–18 (GAGGVGKSA), 29–35 (VDEYDPT), 59–60 (AG), and 116–119 (NKCD). The Effector region signature appears at 32 to 40 (YDPTIEDSY). A disordered region spans residues 167–188 (KEKMSKEGKKKKKKSKTKCVLM). The residue at position 185 (C185) is a Cysteine methyl ester. A lipid anchor (S-farnesyl cysteine) is attached at C185. Positions 186–188 (VLM) are cleaved as a propeptide — removed in mature form.

The protein belongs to the small GTPase superfamily. Ras family.

The protein resides in the cell membrane. The protein localises to the cytoplasm. The catalysed reaction is GTP + H2O = GDP + phosphate + H(+). With respect to regulation, alternates between an inactive form bound to GDP and an active form bound to GTP. Activated by a guanine nucleotide-exchange factor (GEF) and inactivated by a GTPase-activating protein (GAP). Ras proteins bind GDP/GTP and possess intrinsic GTPase activity. Plays an important role in the regulation of cell proliferation. May play a role in promoting oncogenic events by inducing transcriptional silencing of tumor suppressor genes (TSGs). This Cyprinus carpio (Common carp) protein is GTPase KRas (kras).